The following is a 136-amino-acid chain: Urease subunit beta (136 aa).

This sequence belongs to the urease beta subunit family. In terms of assembly, heterotrimer of UreA (gamma), UreB (beta) and UreC (alpha) subunits. Three heterotrimers associate to form the active enzyme.

The protein resides in the cytoplasm. It catalyses the reaction urea + 2 H2O + H(+) = hydrogencarbonate + 2 NH4(+). Its pathway is nitrogen metabolism; urea degradation; CO(2) and NH(3) from urea (urease route): step 1/1. This is Urease subunit beta from Staphylococcus aureus (strain Mu3 / ATCC 700698).